Consider the following 934-residue polypeptide: MGSFAGACEIVEEKDDEVRLPKHSGRYGKSVMGSSSKDLVERKQREYHGSLEYDIDMLFQSISVKPSTTRLMSSSFHHHETSASAGPSRTTSPSKRIASMKKPGTPQSPRFVGLSDSVSLKQALRDRCISKASEMAAQKRLSKSAAASPRVSEADRIKSLYNQVSNESTSSRSGLVPVDKGKGSLVEIPLMPVNDKPSSSKSVPQRFEDPSNPISEPSQAGTSFGLQGVGNQTREIKLLHRSNKPGSCLSSGSGDYEIELDENVASPSTHAFVEDDVIEIDKHVTSLPSHSSKKVNATELDKNISSSAVDSEQKGKLDDAPNSGTENGKTVRKVTRMIPRPKQPKKKILLKKKLKIGVVSATYPTKDDEEIVPSLDSSANQLLCQRCHCSLKSTSIDDNPPSYTSSHNPKICTDSLSSVSNKEAHQGSDENSSGSCNVSQSSEADIVIMKQDVSSSNNSGIGAMVEKETENPTSSEKFEFSLSSKDSLGDYSRSTSISEESNLSRFSCGNKPHMSMDVRWEAIKHIKVQYGSLGLRHFNLLKKLGCGDIGTVYLAELIGTNCLFAIKVMDNEFLARRKKSPRAQAEREILKMLDHPFLPTLYAQFTSDNLSCLVMEYCPGGDLHVLRQKQLGRCFPEPAARFYVAEILLALEYLHMLGIIYRDLKPENILVREDGHIMLTDFDLSLRCAVNPTLVRSNSPPGKDPARISGPYNTSNCIQPFCITEPSCQVSCFSPRLSSNQQQGRKPKRGDHLSKTQQHLSRSLPQLVAEPTEARSNSFVGTHEYLAPEIIKGEGHGAAVDWWTFGVLLYELLYGKTPFKGYNNDETLANVVLQNLKFPDSPLVSFQAKDLIRGLLVKEPENRLGSEKGSVEIKRHPFFEGLNWALIRCAIPPELPDFYEYGGGPEAAADSPGGSNNRYLECKAIGDHLEFELF.

Disordered regions lie at residues 20-40 (LPKHSGRYGKSVMGSSSKDLV), 70-113 (RLMS…RFVG), 189-227 (PLMPVNDKPSSSKSVPQRFEDPSNPISEPSQAGTSFGLQ), 305-343 (SSSAVDSEQKGKLDDAPNSGTENGKTVRKVTRMIPRPKQ), 395-438 (SIDD…SCNV), and 466-493 (EKETENPTSSEKFEFSLSSKDSLGDYSR). 2 stretches are compositionally biased toward polar residues: residues 82–94 (SASAGPSRTTSPS) and 212–227 (NPISEPSQAGTSFGLQ). The segment covering 395–421 (SIDDNPPSYTSSHNPKICTDSLSSVSN) has biased composition (polar residues). The Protein kinase domain maps to 538 to 879 (FNLLKKLGCG…SVEIKRHPFF (342 aa)). ATP contacts are provided by residues 544–552 (LGCGDIGTV) and Lys-567. The active-site Proton acceptor is the Asp-663. Residues 738-773 (SSNQQQGRKPKRGDHLSKTQQHLSRSLPQLVAEPTE) are disordered. Residues 755 to 764 (KTQQHLSRSL) are compositionally biased toward polar residues.

The protein belongs to the protein kinase superfamily. Ser/Thr protein kinase family. Interacts with KCBP. Interacts with PERK8, PERK9, PERK10 and PERK13. In terms of processing, autophosphorylated. As to expression, expressed in roots, cauline leaves, flowers and siliques.

It is found in the cytoplasm. The protein localises to the nucleus. The catalysed reaction is L-seryl-[protein] + ATP = O-phospho-L-seryl-[protein] + ADP + H(+). The enzyme catalyses L-threonyl-[protein] + ATP = O-phospho-L-threonyl-[protein] + ADP + H(+). Functionally, could be involved in the negative regulation of root growth. In Arabidopsis thaliana (Mouse-ear cress), this protein is Serine/threonine-protein kinase KIPK1.